Reading from the N-terminus, the 252-residue chain is Imidazole glycerol phosphate synthase subunit HisF (252 aa).

Residues Asp11 and Asp130 contribute to the active site.

Belongs to the HisA/HisF family. In terms of assembly, heterodimer of HisH and HisF.

It is found in the cytoplasm. It catalyses the reaction 5-[(5-phospho-1-deoxy-D-ribulos-1-ylimino)methylamino]-1-(5-phospho-beta-D-ribosyl)imidazole-4-carboxamide + L-glutamine = D-erythro-1-(imidazol-4-yl)glycerol 3-phosphate + 5-amino-1-(5-phospho-beta-D-ribosyl)imidazole-4-carboxamide + L-glutamate + H(+). The protein operates within amino-acid biosynthesis; L-histidine biosynthesis; L-histidine from 5-phospho-alpha-D-ribose 1-diphosphate: step 5/9. Functionally, IGPS catalyzes the conversion of PRFAR and glutamine to IGP, AICAR and glutamate. The HisF subunit catalyzes the cyclization activity that produces IGP and AICAR from PRFAR using the ammonia provided by the HisH subunit. This is Imidazole glycerol phosphate synthase subunit HisF from Persephonella marina (strain DSM 14350 / EX-H1).